Here is a 539-residue protein sequence, read N- to C-terminus: Protein peanut (539 aa).

A phosphoserine mark is found at Ser6 and Ser13. The disordered stretch occupies residues 29-90 (LRDKQQAASA…GASNGDSNKL (62 aa)). Positions 35–54 (AASASASSATNGSSGSESLV) are enriched in low complexity. A Septin-type G domain is found at 139–411 (RGFEFTLMVV…ENYRCRKLSE (273 aa)). Positions 149 to 156 (GASGLGKS) are G1 motif. Residues 149-156 (GASGLGKS), Thr183, Gly209, 288-296 (KADTMTPDE), Gly345, and Arg360 contribute to the GTP site. The interval 206-209 (DTPG) is G3 motif. The interval 287–290 (AKAD) is G4 motif. A coiled-coil region spans residues 420–516 (RLSNKNPLTQ…HVTLEELKRR (97 aa)). Residues 513-539 (LKRRSLGANSSTDNVDGKKEKKKKGLF) are disordered. Ser517 carries the phosphoserine modification.

It belongs to the TRAFAC class TrmE-Era-EngA-EngB-Septin-like GTPase superfamily. Septin GTPase family. Likely part of a multicomponent septin complex that includes Septin1. Interacts with Septin1. Interacts with hil. Interacts with park. In terms of processing, ubiquitinated by park, leading to its degradation by the proteasome. Accumulates at the leading edge of the cleavage furrow in dividing cells and cellularizing embryos (at protein level).

It is found in the apical cell membrane. The protein localises to the cleavage furrow. It localises to the cytoplasm. The protein resides in the cell cortex. In terms of biological role, involved in cytokinesis and possibly cellularization. Also acts as an enhancer of the sina gene, thus having a role in photoreceptor development. May be involved in p53-dependent apoptosis. The sequence is that of Protein peanut (pnut) from Drosophila melanogaster (Fruit fly).